A 458-amino-acid chain; its full sequence is Ammonium transporter Rh type B (458 aa).

At 1 to 13 (MAGSPSRAAGRRL) the chain is on the cytoplasmic side. The helical transmembrane segment at 14–34 (QLPLLCLFLQGATAVLFAVFV) threads the bilayer. Residues 35–61 (RYNHKTDAALWHRSNHSNADNEFYFRY) lie on the Extracellular side of the membrane. A glycan (N-linked (GlcNAc...) asparagine) is linked at Asn49. Residues 62–82 (PSFQDVHAMVFVGFGFLMVFL) traverse the membrane as a helical segment. The Cytoplasmic segment spans residues 83–86 (QRYG). A helical transmembrane segment spans residues 87 to 107 (FSSVGFTFLLAAFALQWSTLV). Over 108–124 (QGFLHSFHGGHIHVGVE) the chain is Extracellular. A helical membrane pass occupies residues 125-145 (SMINADFCAGAVLISFGAVLG). Residues 146–149 (KTGP) are Cytoplasmic-facing. The chain crosses the membrane as a helical span at residues 150 to 170 (AQLLLMALLEVVLFGINEFVL). At 171 to 178 (LHLLGVRD) the chain is on the extracellular side. The helical transmembrane segment at 179–201 (AGGSMTIHTFGAYFGLVLSRVLY) threads the bilayer. The Cytoplasmic segment spans residues 202-219 (RPQLEKSKHRQGSVYHSD). Residues 220 to 240 (LFTMIGTIFLWIFWPSFNAAL) form a helical membrane-spanning segment. Residues 241 to 251 (TALGAGQHRTA) lie on the Extracellular side of the membrane. A helical transmembrane segment spans residues 252–272 (LNTYYSLAASTLGTFALSALV). At 273-282 (GEDGRLDMVH) the chain is on the cytoplasmic side. Residues 283–303 (IQNAALTGGVVVGTSSKMMLT) traverse the membrane as a helical segment. Position 304 (Pro304) is a topological domain, extracellular. A helical transmembrane segment spans residues 305 to 325 (FGALAAGFLAGTVSTLGYKFF). Over 326-346 (TPILESKFKVQDTCGVHNLHG) the chain is Cytoplasmic. Residues 347-367 (MPGVLGALLGVLVAGLATHEA) traverse the membrane as a helical segment. The Extracellular segment spans residues 368 to 393 (YGDGLESVFPLIAEGQRSATSQAMHQ). Residues 394-414 (LFGLFVTLMFASVGGGLGGLL) form a helical membrane-spanning segment. The Cytoplasmic portion of the chain corresponds to 415 to 458 (LKLPFLDSPPDSQCYEDQVHWQVPGEHEDKAQRPLRVEEADTYA). Positions 416–424 (KLPFLDSPP) are interaction with ANK3. Residues 429-432 (YEDQ) carry the Basolateral sorting signal motif. The interval 439-458 (GEHEDKAQRPLRVEEADTYA) is disordered.

Belongs to the ammonium transporter (TC 2.A.49) family. Rh subfamily. In terms of assembly, interacts (via C-terminus) with ANK2 and ANK3; required for targeting to the basolateral membrane. Post-translationally, N-glycosylated.

The protein localises to the cell membrane. The protein resides in the basolateral cell membrane. The catalysed reaction is NH4(+)(in) = NH4(+)(out). It carries out the reaction methylamine(out) = methylamine(in). It catalyses the reaction CO2(out) = CO2(in). Its function is as follows. Ammonium transporter involved in the maintenance of acid-base homeostasis. Transports ammonium and its related derivative methylammonium across the basolateral plasma membrane of epithelial cells likely contributing to renal transepithelial ammonia transport and ammonia metabolism. May transport either NH4(+) or NH3 ammonia species predominantly mediating an electrogenic NH4(+) transport. May act as a CO2 channel providing for renal acid secretion. The sequence is that of Ammonium transporter Rh type B (RHBG) from Gorilla gorilla gorilla (Western lowland gorilla).